The primary structure comprises 355 residues: Electron transfer flavoprotein subunit alpha, mitochondrial (355 aa).

295-323 (LYIAVGISGAIQHLAGMKDSKVIVAINKD) is an FAD binding site.

The protein belongs to the ETF alpha-subunit/FixB family. As to quaternary structure, heterodimer of an alpha and a beta subunit. It depends on FAD as a cofactor.

Its subcellular location is the mitochondrion matrix. The electron transfer flavoprotein serves as a specific electron acceptor for several dehydrogenases, including five acyl-CoA dehydrogenases, glutaryl-CoA and sarcosine dehydrogenase. It transfers the electrons to the main mitochondrial respiratory chain via ETF-ubiquinone oxidoreductase (ETF dehydrogenase). The sequence is that of Electron transfer flavoprotein subunit alpha, mitochondrial (etfa) from Dictyostelium discoideum (Social amoeba).